The sequence spans 130 residues: Small ribosomal subunit protein uS9 (130 aa).

Belongs to the universal ribosomal protein uS9 family.

The chain is Small ribosomal subunit protein uS9 from Streptococcus uberis (strain ATCC BAA-854 / 0140J).